The following is a 341-amino-acid chain: tRNA N6-adenosine threonylcarbamoyltransferase (341 aa).

Positions 115 and 119 each coordinate Fe cation. Substrate-binding positions include I137–G141, D170, G183, D187, and N276. Fe cation is bound at residue D304.

The protein belongs to the KAE1 / TsaD family. It depends on Fe(2+) as a cofactor.

Its subcellular location is the cytoplasm. It catalyses the reaction L-threonylcarbamoyladenylate + adenosine(37) in tRNA = N(6)-L-threonylcarbamoyladenosine(37) in tRNA + AMP + H(+). Its function is as follows. Required for the formation of a threonylcarbamoyl group on adenosine at position 37 (t(6)A37) in tRNAs that read codons beginning with adenine. Is involved in the transfer of the threonylcarbamoyl moiety of threonylcarbamoyl-AMP (TC-AMP) to the N6 group of A37, together with TsaE and TsaB. TsaD likely plays a direct catalytic role in this reaction. The protein is tRNA N6-adenosine threonylcarbamoyltransferase of Staphylococcus aureus (strain bovine RF122 / ET3-1).